The primary structure comprises 114 residues: MEAIAKHRYARTSAQKARLVADQVRGLSVDKALNILTFSPKKAAALVKKVLESAIANAEHNEGADIDALRVATIMVDEGPSMKRIRPRAKGRADRILKRTAHITVVVSDAKAGR.

Belongs to the universal ribosomal protein uL22 family. As to quaternary structure, part of the 50S ribosomal subunit.

In terms of biological role, this protein binds specifically to 23S rRNA; its binding is stimulated by other ribosomal proteins, e.g. L4, L17, and L20. It is important during the early stages of 50S assembly. It makes multiple contacts with different domains of the 23S rRNA in the assembled 50S subunit and ribosome. Its function is as follows. The globular domain of the protein is located near the polypeptide exit tunnel on the outside of the subunit, while an extended beta-hairpin is found that lines the wall of the exit tunnel in the center of the 70S ribosome. This is Large ribosomal subunit protein uL22 from Aeromonas hydrophila subsp. hydrophila (strain ATCC 7966 / DSM 30187 / BCRC 13018 / CCUG 14551 / JCM 1027 / KCTC 2358 / NCIMB 9240 / NCTC 8049).